Here is a 502-residue protein sequence, read N- to C-terminus: MWGGCIQFRISVPGAKIICFKGHHMSRMSIRGQGQVTGKRSCHLHPLLRCAKGLLLCRPAAGLRHLQNQQNEPSQDPHQCADSCPALHSDRNHLNKEAEAMEGQNPTCSRHESAYPIQSQVSKSKKQRNYVDGAAVDDLKNLWDRLQTLQQSLTEMPYAEGLKPLKNFTSFEELLSMGGDSLLNDLLDIQDSITQCCIRASKYLNKEGNCTSLNYYKQPFIAAVYGPTGCGKSQLLRNLMSAQLIVPTPETVFFITPQVDMIPPQEIAAWETQICEGNFLAGPENTVVPQSGSIMPRFIQMSYAQLTKDENYDVTSPNNIFANAASKGPIAIVMDECMEDLGGNRGIAKFFHAFPSKLLDRFPKCTGYSVIVVLHNMNPRRDQGGNIANLKIQAKVHMISPKVHPSQLNRFINIYTKGQPTAISLLLKDIFNYHRLNTNFDWIVYNTEPIDNCMHWMYLSPQEGLIPMYLNIQGKLYQALERIHRTLTDRQRWTRYYHSKKK.

Positions 99-122 are disordered; the sequence is EAMEGQNPTCSRHESAYPIQSQVS. 226–233 provides a ligand contact to ATP; it reads GPTGCGKS. The DNA-binding stretch occupies residues 495–502; sequence RYYHSKKK.

It belongs to the adenoviridae packaging protein 1 family. In terms of assembly, homodimer. Part of a genome packaging complex composed of packaging proteins 1, 2 and 3; this complex specifically binds to the packaging sequence on the left end of viral genomic DNA and performs packaging of the viral genome. Interacts with protein 33K.

The protein localises to the virion. It is found in the host nucleus. The protein resides in the host nucleoplasm. It localises to the host nucleolus. Component of the packaging machinery which encapsidates the viral DNA into preformed capsids and transcriptional activator of the viral major late promoter (MLP). Binds, along with packaging proteins 2 and 3, to the specific packaging sequence on the left end of viral genomic DNA and displays ATPase activity thereby providing the power stroke of the packaging machinery. The activity of packaging protein IVa2 is stimulated by protein 33K which acts as a terminase. May be the protein that pumps DNA into the capsid powered by ATP hydrolysis. Specifically binds to the 5'-CG-3' nucleotides of the repeats making up the packaging sequence. Component of the DEF-A and DEF-B transcription factors that bind downstream elements of the major late promoter (MLP), and stimulate transcription from the MLP after initiation of viral DNA replication. DEF-A is a heterodimer packaging proteins 1 and 2 and DEF-B is a homodimer of packaging protein 1. This is Packaging protein 1 from Canis lupus familiaris (Dog).